The primary structure comprises 322 residues: Pantothenate kinase (322 aa).

Glycine 100–serine 107 contributes to the ATP binding site.

It belongs to the prokaryotic pantothenate kinase family.

The protein localises to the cytoplasm. The catalysed reaction is (R)-pantothenate + ATP = (R)-4'-phosphopantothenate + ADP + H(+). The protein operates within cofactor biosynthesis; coenzyme A biosynthesis; CoA from (R)-pantothenate: step 1/5. The polypeptide is Pantothenate kinase (Brucella canis (strain ATCC 23365 / NCTC 10854 / RM-666)).